Consider the following 377-residue polypeptide: Queuine tRNA-ribosyltransferase (377 aa).

D89 serves as the catalytic Proton acceptor. Substrate contacts are provided by residues 89 to 93, D143, Q188, and G215; that span reads DSGGF. An RNA binding region spans residues 246–252; sequence GVGKPED. The active-site Nucleophile is the D265. Positions 270–274 are RNA binding; important for wobble base 34 recognition; that stretch reads TRNAR. Residues C303, C305, C308, and H334 each coordinate Zn(2+).

This sequence belongs to the queuine tRNA-ribosyltransferase family. As to quaternary structure, homodimer. Within each dimer, one monomer is responsible for RNA recognition and catalysis, while the other monomer binds to the replacement base PreQ1. Requires Zn(2+) as cofactor.

The enzyme catalyses 7-aminomethyl-7-carbaguanine + guanosine(34) in tRNA = 7-aminomethyl-7-carbaguanosine(34) in tRNA + guanine. It participates in tRNA modification; tRNA-queuosine biosynthesis. Functionally, catalyzes the base-exchange of a guanine (G) residue with the queuine precursor 7-aminomethyl-7-deazaguanine (PreQ1) at position 34 (anticodon wobble position) in tRNAs with GU(N) anticodons (tRNA-Asp, -Asn, -His and -Tyr). Catalysis occurs through a double-displacement mechanism. The nucleophile active site attacks the C1' of nucleotide 34 to detach the guanine base from the RNA, forming a covalent enzyme-RNA intermediate. The proton acceptor active site deprotonates the incoming PreQ1, allowing a nucleophilic attack on the C1' of the ribose to form the product. After dissociation, two additional enzymatic reactions on the tRNA convert PreQ1 to queuine (Q), resulting in the hypermodified nucleoside queuosine (7-(((4,5-cis-dihydroxy-2-cyclopenten-1-yl)amino)methyl)-7-deazaguanosine). The protein is Queuine tRNA-ribosyltransferase of Acinetobacter baumannii (strain ACICU).